We begin with the raw amino-acid sequence, 679 residues long: Methionine--tRNA ligase (679 aa).

The 'HIGH' region signature appears at 14 to 24 (PYANGSIHLGH). Zn(2+) is bound by residues Cys145, Cys148, Cys158, and Cys161. The short motif at 331–335 (KMSKS) is the 'KMSKS' region element. Lys334 provides a ligand contact to ATP. Residues 577–679 (TFAAVDLRIA…NGAKPGQRVM (103 aa)) enclose the tRNA-binding domain.

This sequence belongs to the class-I aminoacyl-tRNA synthetase family. MetG type 1 subfamily. As to quaternary structure, homodimer. The cofactor is Zn(2+).

Its subcellular location is the cytoplasm. The enzyme catalyses tRNA(Met) + L-methionine + ATP = L-methionyl-tRNA(Met) + AMP + diphosphate. Is required not only for elongation of protein synthesis but also for the initiation of all mRNA translation through initiator tRNA(fMet) aminoacylation. This Stutzerimonas stutzeri (strain A1501) (Pseudomonas stutzeri) protein is Methionine--tRNA ligase.